A 935-amino-acid polypeptide reads, in one-letter code: Phosphoenolpyruvate carboxylase (935 aa).

Residues His-161 and Lys-593 contribute to the active site.

This sequence belongs to the PEPCase type 1 family. Mg(2+) is required as a cofactor.

It carries out the reaction oxaloacetate + phosphate = phosphoenolpyruvate + hydrogencarbonate. Forms oxaloacetate, a four-carbon dicarboxylic acid source for the tricarboxylic acid cycle. In Mycolicibacterium paratuberculosis (strain ATCC BAA-968 / K-10) (Mycobacterium paratuberculosis), this protein is Phosphoenolpyruvate carboxylase.